The primary structure comprises 227 residues: NAD(P)H-quinone oxidoreductase subunit K, chloroplastic (227 aa).

Positions 43, 44, 108, and 139 each coordinate [4Fe-4S] cluster.

The protein belongs to the complex I 20 kDa subunit family. NDH is composed of at least 16 different subunits, 5 of which are encoded in the nucleus. [4Fe-4S] cluster serves as cofactor.

The protein localises to the plastid. Its subcellular location is the chloroplast thylakoid membrane. The enzyme catalyses a plastoquinone + NADH + (n+1) H(+)(in) = a plastoquinol + NAD(+) + n H(+)(out). The catalysed reaction is a plastoquinone + NADPH + (n+1) H(+)(in) = a plastoquinol + NADP(+) + n H(+)(out). NDH shuttles electrons from NAD(P)H:plastoquinone, via FMN and iron-sulfur (Fe-S) centers, to quinones in the photosynthetic chain and possibly in a chloroplast respiratory chain. The immediate electron acceptor for the enzyme in this species is believed to be plastoquinone. Couples the redox reaction to proton translocation, and thus conserves the redox energy in a proton gradient. This is NAD(P)H-quinone oxidoreductase subunit K, chloroplastic from Spinacia oleracea (Spinach).